Here is a 214-residue protein sequence, read N- to C-terminus: Adenylate kinase (214 aa).

10–15 lines the ATP pocket; it reads GAGKGT. The segment at 30–59 is NMP; sequence STGDMLRAAIKAGTELGLNAKAVMDAGQLV. AMP-binding positions include Thr-31, Arg-36, 57-59, 85-88, and Gln-92; these read QLV and GFPR. An LID region spans residues 122 to 159; that stretch reads GRRVHSGSGRTYHVVFNPPKVEGKDDVTGEDLVIRADD. ATP is bound by residues Arg-123 and 132–133; that span reads TY. 2 residues coordinate AMP: Arg-156 and Arg-167. Gln-200 lines the ATP pocket.

The protein belongs to the adenylate kinase family. As to quaternary structure, monomer.

It localises to the cytoplasm. It catalyses the reaction AMP + ATP = 2 ADP. It participates in purine metabolism; AMP biosynthesis via salvage pathway; AMP from ADP: step 1/1. Its function is as follows. Catalyzes the reversible transfer of the terminal phosphate group between ATP and AMP. Plays an important role in cellular energy homeostasis and in adenine nucleotide metabolism. The sequence is that of Adenylate kinase from Aeromonas salmonicida (strain A449).